A 376-amino-acid chain; its full sequence is TelA-like protein SE_1089 (376 aa).

Belongs to the TelA family.

The chain is TelA-like protein SE_1089 from Staphylococcus epidermidis (strain ATCC 12228 / FDA PCI 1200).